A 76-amino-acid chain; its full sequence is MDKKAANGGKEKGPLEACWDEWSRCTGWSSAGTGVLWKSCDDQCKKLGKSGGECVLTPSTCPFTRTDKAYQCQCKK.

Disulfide bonds link C18–C25, C40–C44, C54–C61, and C72–C74.

The protein belongs to the macin family.

The protein resides in the secreted. This is Neuromacin-like protein from Aplysia californica (California sea hare).